The chain runs to 132 residues: Hemoglobin heart muscle subunit alpha-type (132 aa).

In terms of domain architecture, Globin spans 1 to 132 (GLSDSEKSAV…GEVGAILTSS (132 aa)). Heme b contacts are provided by H58 and H83.

This sequence belongs to the globin family. As to quaternary structure, monomer.

Its function is as follows. This hemoglobin may replace myocardial myoglobin in this amphibian species. This chain is Hemoglobin heart muscle subunit alpha-type, found in Aquarana catesbeiana (American bullfrog).